The primary structure comprises 123 residues: Small ribosomal subunit protein uS12 (123 aa).

Aspartate 89 is subject to 3-methylthioaspartic acid.

Belongs to the universal ribosomal protein uS12 family. Part of the 30S ribosomal subunit. Contacts proteins S8 and S17. May interact with IF1 in the 30S initiation complex.

Its function is as follows. With S4 and S5 plays an important role in translational accuracy. Interacts with and stabilizes bases of the 16S rRNA that are involved in tRNA selection in the A site and with the mRNA backbone. Located at the interface of the 30S and 50S subunits, it traverses the body of the 30S subunit contacting proteins on the other side and probably holding the rRNA structure together. The combined cluster of proteins S8, S12 and S17 appears to hold together the shoulder and platform of the 30S subunit. In Caulobacter vibrioides (strain ATCC 19089 / CIP 103742 / CB 15) (Caulobacter crescentus), this protein is Small ribosomal subunit protein uS12.